Here is a 381-residue protein sequence, read N- to C-terminus: Cytochrome b (381 aa).

4 consecutive transmembrane segments (helical) span residues 34–54 (FGSL…FLAM), 78–99 (WLIR…YLHI), 114–134 (WNIG…GYVL), and 179–199 (FFAF…IHLL). Heme b-binding residues include His84 and His98. The heme b site is built by His183 and His197. His202 is a binding site for a ubiquinone. A run of 4 helical transmembrane segments spans residues 227–247 (YKDL…ALFT), 289–309 (LGGV…PLLH), 321–341 (LTQI…WIGG), and 348–368 (FIMV…IIMP).

The protein belongs to the cytochrome b family. The cytochrome bc1 complex contains 3 respiratory subunits (MT-CYB, CYC1 and UQCRFS1), 2 core proteins (UQCRC1 and UQCRC2) and probably 6 low-molecular weight proteins. Heme b serves as cofactor.

Its subcellular location is the mitochondrion inner membrane. Its function is as follows. Component of the ubiquinol-cytochrome c reductase complex (complex III or cytochrome b-c1 complex) that is part of the mitochondrial respiratory chain. The b-c1 complex mediates electron transfer from ubiquinol to cytochrome c. Contributes to the generation of a proton gradient across the mitochondrial membrane that is then used for ATP synthesis. The chain is Cytochrome b (mt-cyb) from Negaprion brevirostris (Lemon shark).